The sequence spans 212 residues: Leucyl/phenylalanyl-tRNA--protein transferase (212 aa).

The protein belongs to the L/F-transferase family.

It localises to the cytoplasm. The catalysed reaction is N-terminal L-lysyl-[protein] + L-leucyl-tRNA(Leu) = N-terminal L-leucyl-L-lysyl-[protein] + tRNA(Leu) + H(+). It carries out the reaction N-terminal L-arginyl-[protein] + L-leucyl-tRNA(Leu) = N-terminal L-leucyl-L-arginyl-[protein] + tRNA(Leu) + H(+). The enzyme catalyses L-phenylalanyl-tRNA(Phe) + an N-terminal L-alpha-aminoacyl-[protein] = an N-terminal L-phenylalanyl-L-alpha-aminoacyl-[protein] + tRNA(Phe). Functions in the N-end rule pathway of protein degradation where it conjugates Leu, Phe and, less efficiently, Met from aminoacyl-tRNAs to the N-termini of proteins containing an N-terminal arginine or lysine. The polypeptide is Leucyl/phenylalanyl-tRNA--protein transferase (Paracoccus denitrificans (strain Pd 1222)).